The chain runs to 625 residues: pH-response transcription factor pacC/RIM101 (625 aa).

Residues 1-34 (MSSQDQQQQQQPAQTQTSTSSSSNNENATTATSS) show a composition bias toward low complexity. The interval 1–35 (MSSQDQQQQQQPAQTQTSTSSSSNNENATTATSSI) is disordered. 3 consecutive C2H2-type zinc fingers follow at residues 45–70 (LLCQ…CEKH), 81–105 (LTCG…IRVH), and 111–133 (HKCE…VKTH). A compositionally biased stretch (polar residues) spans 391-416 (APMTATHSSHSVSSGTPALTPPSSSV). The tract at residues 391–440 (APMTATHSSHSVSSGTPALTPPSSSVSYTSGNSPMSSSGMSPISRHSSTS) is disordered. The span at 417–438 (SYTSGNSPMSSSGMSPISRHSS) shows a compositional bias: low complexity. A YPX[LI] motif 1 motif is present at residues 444 to 447 (YPNL). 2 disordered regions span residues 455–543 (SPHH…SPSV) and 584–625 (VKDE…DDDE). Polar residues-rich tracts occupy residues 461 to 472 (TAPTSTLGTNFD) and 490 to 514 (GLNS…SPKE). Residues 615-618 (YPVL) carry the YPX[LI] motif 2 motif.

This sequence belongs to the pacC/RIM101 family. Activated by C-terminal proteolytic cleavage by signaling protease (probably palB/RIM13) at neutral to alkaline ambient pH.

It localises to the cytoplasm. Its subcellular location is the nucleus. Its function is as follows. Transcription factor that mediates regulation of both acid- and alkaline-expressed genes in response to ambient pH. At alkaline ambient pH, activates transcription of alkaline-expressed genes (including pac1 itself) and represses transcription of acid-expressed genes. The protein is pH-response transcription factor pacC/RIM101 (pac1) of Sclerotinia sclerotiorum (White mold).